The sequence spans 517 residues: ATP synthase subunit alpha 2 (517 aa).

173 to 180 is a binding site for ATP; it reads GDRQTGKT.

Belongs to the ATPase alpha/beta chains family. As to quaternary structure, F-type ATPases have 2 components, CF(1) - the catalytic core - and CF(0) - the membrane proton channel. CF(1) has five subunits: alpha(3), beta(3), gamma(1), delta(1), epsilon(1). CF(0) has three main subunits: a(1), b(2) and c(9-12). The alpha and beta chains form an alternating ring which encloses part of the gamma chain. CF(1) is attached to CF(0) by a central stalk formed by the gamma and epsilon chains, while a peripheral stalk is formed by the delta and b chains.

The protein localises to the cell inner membrane. The enzyme catalyses ATP + H2O + 4 H(+)(in) = ADP + phosphate + 5 H(+)(out). In terms of biological role, produces ATP from ADP in the presence of a proton gradient across the membrane. The alpha chain is a regulatory subunit. This Legionella pneumophila subsp. pneumophila (strain Philadelphia 1 / ATCC 33152 / DSM 7513) protein is ATP synthase subunit alpha 2.